The sequence spans 101 residues: uncharacterized protein (101 aa).

Positions methionine 1–serine 24 are cleaved as a signal peptide.

This is an uncharacterized protein from Haemophilus influenzae (strain ATCC 51907 / DSM 11121 / KW20 / Rd).